We begin with the raw amino-acid sequence, 131 residues long: D-ribose pyranase (131 aa).

Histidine 20 functions as the Proton donor in the catalytic mechanism. Substrate contacts are provided by residues aspartate 28, histidine 98, and 120 to 122 (YAN).

Belongs to the RbsD / FucU family. RbsD subfamily. Homodecamer.

The protein localises to the cytoplasm. It carries out the reaction beta-D-ribopyranose = beta-D-ribofuranose. The protein operates within carbohydrate metabolism; D-ribose degradation; D-ribose 5-phosphate from beta-D-ribopyranose: step 1/2. In terms of biological role, catalyzes the interconversion of beta-pyran and beta-furan forms of D-ribose. In Enterococcus faecalis (strain ATCC 700802 / V583), this protein is D-ribose pyranase.